The following is a 239-amino-acid chain: Ribonuclease PH (239 aa).

Phosphate contacts are provided by residues Arg87 and Gly125 to Arg127.

This sequence belongs to the RNase PH family. In terms of assembly, homohexameric ring arranged as a trimer of dimers.

It catalyses the reaction tRNA(n+1) + phosphate = tRNA(n) + a ribonucleoside 5'-diphosphate. Phosphorolytic 3'-5' exoribonuclease that plays an important role in tRNA 3'-end maturation. Removes nucleotide residues following the 3'-CCA terminus of tRNAs; can also add nucleotides to the ends of RNA molecules by using nucleoside diphosphates as substrates, but this may not be physiologically important. Probably plays a role in initiation of 16S rRNA degradation (leading to ribosome degradation) during starvation. The protein is Ribonuclease PH of Cyanothece sp. (strain PCC 7425 / ATCC 29141).